A 236-amino-acid polypeptide reads, in one-letter code: NAD(P)H-hydrate epimerase (236 aa).

Positions 11 to 217 constitute a YjeF N-terminal domain; sequence AAALDRELMS…SIAKKYDFDV (207 aa). 61-65 provides a ligand contact to (6S)-NADPHX; the sequence is NNGGD. Positions 62 and 123 each coordinate K(+). Residues 127 to 133 and Asp156 each bind (6S)-NADPHX; that span reads GFSFSGE. Ser159 lines the K(+) pocket.

The protein belongs to the NnrE/AIBP family. K(+) is required as a cofactor.

Its subcellular location is the cytoplasm. It localises to the mitochondrion. It carries out the reaction (6R)-NADHX = (6S)-NADHX. The catalysed reaction is (6R)-NADPHX = (6S)-NADPHX. Functionally, catalyzes the epimerization of the S- and R-forms of NAD(P)HX, a damaged form of NAD(P)H that is a result of enzymatic or heat-dependent hydration. This is a prerequisite for the S-specific NAD(P)H-hydrate dehydratase to allow the repair of both epimers of NAD(P)HX. The sequence is that of NAD(P)H-hydrate epimerase from Neurospora crassa (strain ATCC 24698 / 74-OR23-1A / CBS 708.71 / DSM 1257 / FGSC 987).